The following is a 531-amino-acid chain: GTPase Obg (531 aa).

Positions 2 to 159 (ASFVDRVIVH…QEVELELKSI (158 aa)) constitute an Obg domain. One can recognise an OBG-type G domain in the interval 160 to 341 (ADIALVGFPS…LSFAMAALVS (182 aa)). GTP contacts are provided by residues 166 to 173 (GFPSAGKS), 191 to 195 (FTTLV), 212 to 215 (DVPG), 293 to 296 (NKVD), and 322 to 324 (STA). Mg(2+)-binding residues include S173 and T193. The interval 346–365 (QEEQREQQRQTVPVLQPEPV) is disordered. In terms of domain architecture, OCT spans 368–453 (RRGRDRREFV…ENGVVFDWEP (86 aa)). The disordered stretch occupies residues 459 to 531 (AELLGGPRGS…TSETKETNEK (73 aa)). 2 stretches are compositionally biased toward basic and acidic residues: residues 468 to 507 (SDLRLEETSRPTRREKREQFYDRMDAKSEARAELEQERRA) and 514 to 531 (VDARDRRRTSETKETNEK).

Belongs to the TRAFAC class OBG-HflX-like GTPase superfamily. OBG GTPase family. As to quaternary structure, monomer. Mg(2+) serves as cofactor.

It is found in the cytoplasm. Its function is as follows. An essential GTPase which binds GTP, GDP and possibly (p)ppGpp with moderate affinity, with high nucleotide exchange rates and a fairly low GTP hydrolysis rate. Plays a role in control of the cell cycle, stress response, ribosome biogenesis and in those bacteria that undergo differentiation, in morphogenesis control. The chain is GTPase Obg from Kocuria rhizophila (strain ATCC 9341 / DSM 348 / NBRC 103217 / DC2201).